Reading from the N-terminus, the 443-residue chain is MRVLLTSFALDAHFNGSVPLAWALRAAGHEVRVASQPALTASITAAGLTAVPVGADPRLDEMVKGVGDAVLSHHADQSLDADTPGQLTPAFLQGWDTMMTATFYTLINDDPMVDDLVAFARGWEPDLILWEPFTFAGAVAAKVTGAAHARLLSFPDLFMSMRRAYLAQLGAAPAGPAGGNGTTHPDDSLGQWLEWTLGRYGVPFDEEAVTGQWSVDQVPRSFRPPSDRPVVGMRYVPYNGPGPAVVPDWLRVPPTRPRVCVTLGMTARTSEFPNAVPVDLVLKAVEGLDIEVVATLDAEERALLTHVPDNVRLVDHVPLHALLPTCAAIVHHGGAGTWSTALVEGVPQIAMGWIWDAIDRAQRQQALGAGLHLPSHEVTVEGLRGRLVRLLDEPSFTAAAARLRAEAESEPTPAQVVPVLERLTAQHRAREPRRPGGTSPCVS.

The first 23 residues, 1 to 23 (MRVLLTSFALDAHFNGSVPLAWA), serve as a signal peptide directing secretion.

Belongs to the glycosyltransferase 28 family.

It catalyses the reaction dTDP-beta-L-rhodosamine + aklavinone = aclacinomycin T + dTDP + 2 H(+). With respect to regulation, the activity of AknS is substantially increased by the addition of the accessory protein AknT. Its function is as follows. Involved in the biosynthesis of the anthracycline antitumor agent aclacinomycin A. Catalyzes the transfer of the proximal deoxyhexose, L-rhodosamine, from dTDP-beta-L-rhodosamine to the C7-OH of aklavinone aglycone to yield aclacinomycin T (rhodosaminyl-aklavinone). It can also use dTDP-2-deoxy-beta-L-fucose, TDP-2-deoxyfucose, dTDP-4-amino-2-deoxyrhamnose, TDP-L-rhodosamine as sugar donor and epsilon-rhodomycinone as sugar acceptor. This is Aklavinone 7-beta-L-rhodosaminyltransferase from Streptomyces galilaeus.